We begin with the raw amino-acid sequence, 389 residues long: Probable protein phosphatase 2C 12 (389 aa).

The region spanning 42–356 (VASLFSQRGK…DDCSAVCLFL (315 aa)) is the PPM-type phosphatase domain. 2 residues coordinate Mn(2+): aspartate 77 and glycine 78. The interval 119–145 (AFSDDAAASSSADSSGNSSPQPSASAS) is disordered. A compositionally biased stretch (low complexity) spans 121-145 (SDDAAASSSADSSGNSSPQPSASAS). The Mn(2+) site is built by aspartate 301 and aspartate 347.

This sequence belongs to the PP2C family. It depends on Mg(2+) as a cofactor. Mn(2+) serves as cofactor.

The enzyme catalyses O-phospho-L-seryl-[protein] + H2O = L-seryl-[protein] + phosphate. It catalyses the reaction O-phospho-L-threonyl-[protein] + H2O = L-threonyl-[protein] + phosphate. In Oryza sativa subsp. japonica (Rice), this protein is Probable protein phosphatase 2C 12.